Here is a 322-residue protein sequence, read N- to C-terminus: NADH-quinone oxidoreductase subunit H (322 aa).

The next 8 membrane-spanning stretches (helical) occupy residues 15-35, 81-101, 114-134, 149-169, 184-204, 237-257, 265-285, and 299-319; these read IFQS…MSVV, ITFL…ITII, IGVL…LLAG, ATAQ…GVVA, IGLW…IAGL, FFIG…TMFF, FPSY…FILI, and LFGW…TALI.

It belongs to the complex I subunit 1 family. As to quaternary structure, NDH-1 is composed of 13 different subunits. Subunits NuoA, H, J, K, L, M, N constitute the membrane sector of the complex.

It localises to the cell membrane. The enzyme catalyses a quinone + NADH + 5 H(+)(in) = a quinol + NAD(+) + 4 H(+)(out). NDH-1 shuttles electrons from NADH, via FMN and iron-sulfur (Fe-S) centers, to quinones in the respiratory chain. The immediate electron acceptor for the enzyme in this species is believed to be ubiquinone. Couples the redox reaction to proton translocation (for every two electrons transferred, four hydrogen ions are translocated across the cytoplasmic membrane), and thus conserves the redox energy in a proton gradient. This subunit may bind ubiquinone. The chain is NADH-quinone oxidoreductase subunit H from Buchnera aphidicola subsp. Baizongia pistaciae (strain Bp).